Here is a 151-residue protein sequence, read N- to C-terminus: Putative pre-16S rRNA nuclease (151 aa).

The protein belongs to the YqgF nuclease family.

The protein localises to the cytoplasm. Functionally, could be a nuclease involved in processing of the 5'-end of pre-16S rRNA. The chain is Putative pre-16S rRNA nuclease from Bifidobacterium longum subsp. infantis (strain ATCC 15697 / DSM 20088 / JCM 1222 / NCTC 11817 / S12).